The sequence spans 286 residues: Bifunctional protein FolD (286 aa).

NADP(+) contacts are provided by residues 165–167 (GRS), serine 190, and valine 231.

It belongs to the tetrahydrofolate dehydrogenase/cyclohydrolase family. Homodimer.

The enzyme catalyses (6R)-5,10-methylene-5,6,7,8-tetrahydrofolate + NADP(+) = (6R)-5,10-methenyltetrahydrofolate + NADPH. It catalyses the reaction (6R)-5,10-methenyltetrahydrofolate + H2O = (6R)-10-formyltetrahydrofolate + H(+). The protein operates within one-carbon metabolism; tetrahydrofolate interconversion. Catalyzes the oxidation of 5,10-methylenetetrahydrofolate to 5,10-methenyltetrahydrofolate and then the hydrolysis of 5,10-methenyltetrahydrofolate to 10-formyltetrahydrofolate. This chain is Bifunctional protein FolD, found in Bacillus cereus (strain ATCC 14579 / DSM 31 / CCUG 7414 / JCM 2152 / NBRC 15305 / NCIMB 9373 / NCTC 2599 / NRRL B-3711).